We begin with the raw amino-acid sequence, 332 residues long: Myogenic-determination protein (332 aa).

Positions 22-54 (HNGYGQPTHPGYGFSAYSQQNPIAHPGQNPHQT) are disordered. Residues 161–212 (DRRKAATMRERRRLRKVNEAFEILKRRTSSNPNQRLPKVEILRNAIEYIESL) form the bHLH domain. The segment covering 293–309 (TTSPIQNKATPSASDTQ) has biased composition (polar residues). Positions 293-332 (TTSPIQNKATPSASDTQSPPSSGATAPTSLHVNFKRKCST) are disordered. Residues 310-321 (SPPSSGATAPTS) show a composition bias toward low complexity.

In terms of assembly, efficient DNA binding requires dimerization with another bHLH protein.

It is found in the nucleus. May play an important role in the early development of muscle. The sequence is that of Myogenic-determination protein (nau) from Drosophila melanogaster (Fruit fly).